The primary structure comprises 330 residues: 7,8-didemethyl-8-hydroxy-5-deazariboflavin synthase (330 aa).

Residues 5–245 (VTFSRNVFIP…SDVAVQVAPN (241 aa)) form the Radical SAM core domain. Residues Cys19, Cys23, and Cys26 each coordinate [4Fe-4S] cluster.

Belongs to the radical SAM superfamily. CofG family. Consists of two subunits, CofG and CofH. Requires [4Fe-4S] cluster as cofactor.

It catalyses the reaction 5-amino-5-(4-hydroxybenzyl)-6-(D-ribitylimino)-5,6-dihydrouracil + S-adenosyl-L-methionine = 7,8-didemethyl-8-hydroxy-5-deazariboflavin + 5'-deoxyadenosine + L-methionine + NH4(+) + H(+). It functions in the pathway cofactor biosynthesis; coenzyme F0 biosynthesis. In terms of biological role, catalyzes the radical-mediated synthesis of 7,8-didemethyl-8-hydroxy-5-deazariboflavin from 5-amino-5-(4-hydroxybenzyl)-6-(D-ribitylimino)-5,6-dihydrouracil. The sequence is that of 7,8-didemethyl-8-hydroxy-5-deazariboflavin synthase from Methanococcoides burtonii (strain DSM 6242 / NBRC 107633 / OCM 468 / ACE-M).